Reading from the N-terminus, the 44-residue chain is Protein PsbN (44 aa).

Residues 6–26 (FFFTIFLWCLLLSVTGYSVYV) form a helical membrane-spanning segment.

It belongs to the PsbN family.

The protein localises to the plastid. The protein resides in the chloroplast thylakoid membrane. Functionally, may play a role in photosystem I and II biogenesis. This Oltmannsiellopsis viridis (Marine flagellate) protein is Protein PsbN.